A 402-amino-acid polypeptide reads, in one-letter code: 4-hydroxy-3-methylbut-2-enyl diphosphate reductase (402 aa).

C66 is a binding site for [4Fe-4S] cluster. A (2E)-4-hydroxy-3-methylbut-2-enyl diphosphate-binding site is contributed by H96. Position 96 (H96) interacts with dimethylallyl diphosphate. Residue H96 coordinates isopentenyl diphosphate. C157 is a [4Fe-4S] cluster binding site. H185 contributes to the (2E)-4-hydroxy-3-methylbut-2-enyl diphosphate binding site. H185 lines the dimethylallyl diphosphate pocket. H185 contacts isopentenyl diphosphate. E187 (proton donor) is an active-site residue. T250 serves as a coordination point for (2E)-4-hydroxy-3-methylbut-2-enyl diphosphate. C288 contributes to the [4Fe-4S] cluster binding site. 4 residues coordinate (2E)-4-hydroxy-3-methylbut-2-enyl diphosphate: S317, S318, N319, and S379. Dimethylallyl diphosphate is bound by residues S317, S318, N319, and S379. The isopentenyl diphosphate site is built by S317, S318, N319, and S379.

The protein belongs to the IspH family. The cofactor is [4Fe-4S] cluster.

It catalyses the reaction isopentenyl diphosphate + 2 oxidized [2Fe-2S]-[ferredoxin] + H2O = (2E)-4-hydroxy-3-methylbut-2-enyl diphosphate + 2 reduced [2Fe-2S]-[ferredoxin] + 2 H(+). It carries out the reaction dimethylallyl diphosphate + 2 oxidized [2Fe-2S]-[ferredoxin] + H2O = (2E)-4-hydroxy-3-methylbut-2-enyl diphosphate + 2 reduced [2Fe-2S]-[ferredoxin] + 2 H(+). It functions in the pathway isoprenoid biosynthesis; dimethylallyl diphosphate biosynthesis; dimethylallyl diphosphate from (2E)-4-hydroxy-3-methylbutenyl diphosphate: step 1/1. Its pathway is isoprenoid biosynthesis; isopentenyl diphosphate biosynthesis via DXP pathway; isopentenyl diphosphate from 1-deoxy-D-xylulose 5-phosphate: step 6/6. Functionally, catalyzes the conversion of 1-hydroxy-2-methyl-2-(E)-butenyl 4-diphosphate (HMBPP) into a mixture of isopentenyl diphosphate (IPP) and dimethylallyl diphosphate (DMAPP). Acts in the terminal step of the DOXP/MEP pathway for isoprenoid precursor biosynthesis. In Microcystis aeruginosa (strain NIES-843 / IAM M-2473), this protein is 4-hydroxy-3-methylbut-2-enyl diphosphate reductase.